Consider the following 377-residue polypeptide: Nitric oxide reductase FlRd-NAD(+) reductase (377 aa).

The protein belongs to the FAD-dependent oxidoreductase family. It depends on FAD as a cofactor.

The protein resides in the cytoplasm. The catalysed reaction is 2 reduced [nitric oxide reductase rubredoxin domain] + NAD(+) + H(+) = 2 oxidized [nitric oxide reductase rubredoxin domain] + NADH. Its pathway is nitrogen metabolism; nitric oxide reduction. In terms of biological role, one of at least two accessory proteins for anaerobic nitric oxide (NO) reductase. Reduces the rubredoxin moiety of NO reductase. This Salmonella typhi protein is Nitric oxide reductase FlRd-NAD(+) reductase.